Here is an 846-residue protein sequence, read N- to C-terminus: Penicillin G acylase (846 aa).

An N-terminal signal peptide occupies residues 1 to 26 (MKNRNRMIVNCVTASLMYYWSLPALA). Glu178 contacts Ca(2+). Residues 236-289 (ALLPRYDLPAPMLDRPAKGADGALLALTAGKNRETIAAQFAQGGANGLAGYPTT) constitute a propeptide, spacer peptide. Ser290 acts as the Nucleophile in catalysis. Ca(2+) contacts are provided by Asp362, Val364, Asp365, Pro494, and Asp541.

Belongs to the peptidase S45 family. As to quaternary structure, heterodimer of an alpha subunit and a beta subunit processed from the same precursor. It depends on Ca(2+) as a cofactor.

Its subcellular location is the periplasm. It catalyses the reaction a penicillin + H2O = 6-aminopenicillanate + a carboxylate. In Escherichia coli, this protein is Penicillin G acylase (pac).